A 542-amino-acid polypeptide reads, in one-letter code: GATA-type transcription factor sreA (542 aa).

A compositionally biased stretch (polar residues) spans 1–10 (MLTLRSSSDT). Residues 1–172 (MLTLRSSSDT…SAQNASGCGS (172 aa)) are disordered. The span at 44–63 (ADLRPDSFDASRSPDGDKAS) shows a compositional bias: basic and acidic residues. Low complexity-rich tracts occupy residues 75–117 (SSDQ…PKAS) and 148–168 (SSTS…QNAS). The cystein-rich region (CRR) stretch occupies residues 178-196 (CPGGGSCNGTGGAVGCDGC). Residues 210–223 (APSARQARASPSAQ) are compositionally biased toward low complexity. Residues 210–248 (APSARQARASPSAQTSEEQAQSGLDALDSASQDASGMPK) form a disordered region. The GATA-type zinc finger occupies 250-274 (CQNCGTTLTPLWRRDDQGNTICNAC). Residues 289 to 300 (MKKTVIKRRKRV) show a composition bias toward basic residues. 2 disordered regions span residues 289–408 (MKKT…PATR) and 461–525 (SNAP…REAE). Polar residues-rich tracts occupy residues 311–320 (AGSSDNSSVS) and 369–387 (KPTQ…NHSP). Positions 396-407 (ESTSAESAPPAT) are enriched in low complexity. The span at 464–483 (PARSQTQTQPQPGTRSYSPN) shows a compositional bias: polar residues. A coiled-coil region spans residues 510–542 (DKVKAARRAQLQREAENMREALRAKERELASLK).

Its subcellular location is the nucleus. GATA-type transcription repressor that regulates iron acquisition genes through specific binding the GATA sequence elements of target promoters. SreA targets include genes encoding a number of key iron-regulated factors such as the siderophore biosynthesis genes. Is dispensable for growth on keratin substrates. SreA represses the expression of hapX and the siderophore system during iron sufficient conditions by an iron-sensing mechanism, while hapX represses sreA and activates the siderophore system during iron-limiting conditions resulting in efficient iron uptake and inhibition of iron-consuming pathways. This is GATA-type transcription factor sreA from Arthroderma benhamiae (strain ATCC MYA-4681 / CBS 112371) (Trichophyton mentagrophytes).